A 56-amino-acid polypeptide reads, in one-letter code: UPF0291 protein Clos_1191 (56 aa).

This sequence belongs to the UPF0291 family.

It is found in the cytoplasm. In Alkaliphilus oremlandii (strain OhILAs) (Clostridium oremlandii (strain OhILAs)), this protein is UPF0291 protein Clos_1191.